The chain runs to 289 residues: Rhodopsin (289 aa).

Topologically, residues Y1 to A7 are extracellular. The chain crosses the membrane as a helical span at residues Y8–V32. Residues T33–N44 are Cytoplasmic-facing. A helical membrane pass occupies residues Y45–Y67. Residues T68 to C81 lie on the Extracellular side of the membrane. C81 and C158 are oxidised to a cystine. The chain crosses the membrane as a helical span at residues N82–I104. Residues E105–W107 carry the 'Ionic lock' involved in activated form stabilization motif. The Cytoplasmic portion of the chain corresponds to E105–H123. Residues A124 to V144 traverse the membrane as a helical segment. At G145 to S173 the chain is on the extracellular side. A helical transmembrane segment spans residues F174 to G195. Residues R196–R223 are Cytoplasmic-facing. A helical membrane pass occupies residues M224–W245. At I246–V257 the chain is on the extracellular side. Residues F258–C279 form a helical membrane-spanning segment. At K267 the chain carries N6-(retinylidene)lysine. Over M280–I289 the chain is Cytoplasmic.

It belongs to the G-protein coupled receptor 1 family. Opsin subfamily. Phosphorylated on some or all of the serine and threonine residues present in the C-terminal region. In terms of processing, contains one covalently linked retinal chromophore.

The protein localises to the membrane. The protein resides in the cell projection. It is found in the cilium. It localises to the photoreceptor outer segment. Functionally, photoreceptor required for image-forming vision at low light intensity. While most salt water fish species use retinal as chromophore, most freshwater fish use 3-dehydroretinal, or a mixture of retinal and 3-dehydroretinal. Light-induced isomerization of 11-cis to all-trans retinal triggers a conformational change that activates signaling via G-proteins. Subsequent receptor phosphorylation mediates displacement of the bound G-protein alpha subunit by arrestin and terminates signaling. The sequence is that of Rhodopsin (rho) from Comephorus dybowskii.